Consider the following 180-residue polypeptide: uncharacterized protein (180 aa).

An N-terminal signal peptide occupies residues methionine 1 to alanine 22.

The protein belongs to the fimbrial protein family.

Functionally, part of the yehABCD fimbrial operon. Could contribute to adhesion to various surfaces in specific environmental niches. This is an uncharacterized protein from Escherichia coli (strain K12).